The sequence spans 140 residues: Inner membrane protein YphA (140 aa).

The Cytoplasmic segment spans residues 1-13 (MNTLRYFDFGAAR). The helical transmembrane segment at 14–34 (PVLLLIARIAVVLIFIIFGFP) threads the bilayer. Topologically, residues 35-56 (KMMGFDGTVQYMASLGAPMPML) are periplasmic. Residues 57–77 (AAIIAVVMEVPAAILIVLGFF) form a helical membrane-spanning segment. Residues 78 to 79 (TR) are Cytoplasmic-facing. The helical transmembrane segment at 80–100 (PLAVLFIFYTLGTAVIGHHYW) threads the bilayer. The Periplasmic portion of the chain corresponds to 101–116 (DMTGDAVGPNMINFWK). The helical transmembrane segment at 117–137 (NVSIAGAFLLLAITGPGAISL) threads the bilayer. Residues 138-140 (DRR) are Cytoplasmic-facing.

Belongs to the DoxX family.

It localises to the cell inner membrane. This chain is Inner membrane protein YphA (yphA), found in Escherichia coli (strain K12).